We begin with the raw amino-acid sequence, 508 residues long: Mu-like prophage FluMu protein gp28 (508 aa).

It to phage Mu protein gp28.

The polypeptide is Mu-like prophage FluMu protein gp28 (Haemophilus influenzae (strain ATCC 51907 / DSM 11121 / KW20 / Rd)).